The following is a 287-amino-acid chain: tRNA N(3)-cytidine methyltransferase METTL6 (287 aa).

The S-adenosyl-L-methionine site is built by W45, Y49, G87, D110, D136, L137, and I157. Residues 267–287 (RKPPKDPAPTTDSASLLRKEF) are disordered.

It belongs to the methyltransferase superfamily. METL family. As to quaternary structure, monomer. Interacts with SARS1/SerRS; interaction is mediated via tRNA(Ser) and is required for N(3)-methylcytidine methylation.

It is found in the cytoplasm. Its subcellular location is the nucleus. It catalyses the reaction cytidine(32) in tRNA(Ser) + S-adenosyl-L-methionine = N(3)-methylcytidine(32) in tRNA(Ser) + S-adenosyl-L-homocysteine + H(+). Its function is as follows. S-adenosyl-L-methionine-dependent methyltransferase that mediates N(3)-methylcytidine modification of residue 32 of the tRNA anticodon loop of tRNA(Ser), including tRNA(Ser)(UGA) and tRNA(Ser)(GCU). Interaction with SARS1/SerRS is required for N(3)-methylcytidine methylation. The chain is tRNA N(3)-cytidine methyltransferase METTL6 (Mettl6) from Rattus norvegicus (Rat).